A 348-amino-acid chain; its full sequence is Anthranilate phosphoribosyltransferase (348 aa).

Residues glycine 81, glycine 84–aspartate 85, asparagine 91–threonine 94, lysine 109–glycine 117, and serine 121 contribute to the 5-phospho-alpha-D-ribose 1-diphosphate site. Glycine 81 is a binding site for anthranilate. Mg(2+) is bound at residue serine 93. Position 112 (asparagine 112) interacts with anthranilate. Anthranilate is bound at residue arginine 167. 2 residues coordinate Mg(2+): aspartate 226 and glutamate 227.

This sequence belongs to the anthranilate phosphoribosyltransferase family. As to quaternary structure, homodimer. Mg(2+) is required as a cofactor.

The enzyme catalyses N-(5-phospho-beta-D-ribosyl)anthranilate + diphosphate = 5-phospho-alpha-D-ribose 1-diphosphate + anthranilate. The protein operates within amino-acid biosynthesis; L-tryptophan biosynthesis; L-tryptophan from chorismate: step 2/5. In terms of biological role, catalyzes the transfer of the phosphoribosyl group of 5-phosphorylribose-1-pyrophosphate (PRPP) to anthranilate to yield N-(5'-phosphoribosyl)-anthranilate (PRA). The sequence is that of Anthranilate phosphoribosyltransferase from Stutzerimonas stutzeri (strain A1501) (Pseudomonas stutzeri).